The sequence spans 510 residues: 2,3-bisphosphoglycerate-independent phosphoglycerate mutase (510 aa).

Mn(2+) contacts are provided by aspartate 12 and serine 62. Catalysis depends on serine 62, which acts as the Phosphoserine intermediate. Substrate-binding positions include histidine 123, 153–154 (RD), arginine 185, arginine 191, 260–263 (RPDR), and lysine 335. Residues aspartate 402, histidine 406, aspartate 443, histidine 444, and histidine 461 each coordinate Mn(2+).

It belongs to the BPG-independent phosphoglycerate mutase family. In terms of assembly, monomer. Mn(2+) serves as cofactor.

The enzyme catalyses (2R)-2-phosphoglycerate = (2R)-3-phosphoglycerate. It participates in carbohydrate degradation; glycolysis; pyruvate from D-glyceraldehyde 3-phosphate: step 3/5. Its function is as follows. Catalyzes the interconversion of 2-phosphoglycerate and 3-phosphoglycerate. The sequence is that of 2,3-bisphosphoglycerate-independent phosphoglycerate mutase from Listeria welshimeri serovar 6b (strain ATCC 35897 / DSM 20650 / CCUG 15529 / CIP 8149 / NCTC 11857 / SLCC 5334 / V8).